The primary structure comprises 567 residues: DNA ligase B (567 aa).

The N6-AMP-lysine intermediate role is filled by Lys-132.

The protein belongs to the NAD-dependent DNA ligase family. LigB subfamily.

The enzyme catalyses NAD(+) + (deoxyribonucleotide)n-3'-hydroxyl + 5'-phospho-(deoxyribonucleotide)m = (deoxyribonucleotide)n+m + AMP + beta-nicotinamide D-nucleotide.. Its function is as follows. Catalyzes the formation of phosphodiester linkages between 5'-phosphoryl and 3'-hydroxyl groups in double-stranded DNA using NAD as a coenzyme and as the energy source for the reaction. The protein is DNA ligase B of Yersinia pestis bv. Antiqua (strain Angola).